Reading from the N-terminus, the 352-residue chain is Ion-translocating oxidoreductase complex subunit D (352 aa).

The next 4 membrane-spanning stretches (helical) occupy residues 20 to 40, 42 to 62, 89 to 109, and 123 to 143; these read IMLLVLLAAVPGIAAQLWFFG, GTLVQILLASVSALLAEALVL, IPPLAPWWMVVLGTVFAVIIA, and PAMIGYVVLLISFPVQMTSWL. The residue at position 187 (T187) is an FMN phosphoryl threonine. The next 5 helical transmembrane spans lie at 214 to 234, 242 to 262, 267 to 287, 301 to 321, and 322 to 342; these read ILAGAGWQWVNLAWLAGGVWL, WHVPLSFLVTLALCATLGWLF, LAAPQIHLLSGATMLGAFFIL, LIFGALAGLLVWMIRSFGGYP, and DGVAFAVLLANITVPLIDYYT.

It belongs to the NqrB/RnfD family. As to quaternary structure, the complex is composed of six subunits: RsxA, RsxB, RsxC, RsxD, RsxE and RsxG. FMN serves as cofactor.

It localises to the cell inner membrane. Functionally, part of a membrane-bound complex that couples electron transfer with translocation of ions across the membrane. Required to maintain the reduced state of SoxR. This is Ion-translocating oxidoreductase complex subunit D from Escherichia coli (strain UTI89 / UPEC).